Reading from the N-terminus, the 545-residue chain is Chaperonin GroEL (545 aa).

ATP is bound by residues 30–33 (TLGP), lysine 51, 87–91 (DGTTT), glycine 415, and aspartate 495.

It belongs to the chaperonin (HSP60) family. Forms a cylinder of 14 subunits composed of two heptameric rings stacked back-to-back. Interacts with the co-chaperonin GroES.

Its subcellular location is the cytoplasm. It catalyses the reaction ATP + H2O + a folded polypeptide = ADP + phosphate + an unfolded polypeptide.. Functionally, together with its co-chaperonin GroES, plays an essential role in assisting protein folding. The GroEL-GroES system forms a nano-cage that allows encapsulation of the non-native substrate proteins and provides a physical environment optimized to promote and accelerate protein folding. The sequence is that of Chaperonin GroEL from Shewanella baltica (strain OS185).